We begin with the raw amino-acid sequence, 118 residues long: Eukaryotic translation initiation factor 4E-binding protein 1 (118 aa).

Composition is skewed to polar residues over residues 1 to 12 (MSGGSSCSQTPS) and 34 to 48 (YSTTPGGTLFSTTPG). Disordered regions lie at residues 1 to 20 (MSGGSSCSQTPSRAIPATRR) and 25 to 48 (DGVQLPPGDYSTTPGGTLFSTTPG). Position 2 is an N-acetylserine (serine 2). Position 37 is a phosphothreonine; by MTOR (threonine 37). Threonine 41 carries the phosphothreonine modification. Position 44 is a phosphoserine (serine 44). Threonine 46 carries the phosphothreonine; by MTOR modification. Threonine 50 is modified (phosphothreonine). A Phosphotyrosine modification is found at tyrosine 54. The YXXXXLphi motif signature appears at 54 to 60 (YDRKFLM). Residue lysine 57 forms a Glycyl lysine isopeptide (Lys-Gly) (interchain with G-Cter in ubiquitin) linkage. Positions 64 to 118 (NSPVTKTPPRDLPTIPGVTSPSSDEPPMEASQSHLRNSPEDKRAGGEESQFEMDI) are disordered. A Phosphoserine; by DYRK2, MAPK1, MAPK3 and MTOR modification is found at serine 65. Position 70 is a phosphothreonine; by MTOR (threonine 70). A Phosphothreonine modification is found at threonine 77. Residues serine 83 and serine 96 each carry the phosphoserine modification. Basic and acidic residues predominate over residues 100–109 (NSPEDKRAGG). A Phosphoserine; by DYRK2 modification is found at serine 101. Serine 112 is subject to Phosphoserine. The short motif at 114–118 (FEMDI) is the TOS motif element.

Belongs to the eIF4E-binding protein family. Hypophosphorylated EIF4EBP1 competes with EIF4G1/EIF4G3 to interact with EIF4E; insulin stimulated MAP-kinase (MAPK1 and MAPK3) or mTORC1 phosphorylation of EIF4EBP1 causes dissociation of the complex allowing EIF4G1/EIF4G3 to bind and consequent initiation of translation. Interacts (via TOS motif) with RPTOR; promoting phosphorylation by mTORC1. Post-translationally, phosphorylated on serine and threonine residues in response to insulin, EGF and PDGF. Phosphorylation at Thr-37, Thr-46, Ser-65 and Thr-70, corresponding to the hyperphosphorylated form, is regulated by mTORC1 and abolishes binding to EIF4E. In terms of processing, ubiquitinated: when eIF4E levels are low, hypophosphorylated form is ubiquitinated by the BCR(KLHL25) complex, leading to its degradation and serving as a homeostatic mechanism to maintain translation and prevent eIF4E inhibition when eIF4E levels are low. Not ubiquitinated when hyperphosphorylated (at Thr-37, Thr-46, Ser-65 and Thr-70) or associated with eIF4E.

It localises to the cytoplasm. The protein resides in the nucleus. Its function is as follows. Repressor of translation initiation that regulates EIF4E activity by preventing its assembly into the eIF4F complex: hypophosphorylated form competes with EIF4G1/EIF4G3 and strongly binds to EIF4E, leading to repress translation. In contrast, hyperphosphorylated form dissociates from EIF4E, allowing interaction between EIF4G1/EIF4G3 and EIF4E, leading to initiation of translation. Mediates the regulation of protein translation by hormones, growth factors and other stimuli that signal through the MAP kinase and mTORC1 pathways. This is Eukaryotic translation initiation factor 4E-binding protein 1 (EIF4EBP1) from Homo sapiens (Human).